The chain runs to 491 residues: Glycogen synthase (491 aa).

Lys-15 serves as a coordination point for ADP-alpha-D-glucose.

It belongs to the glycosyltransferase 1 family. Bacterial/plant glycogen synthase subfamily.

It carries out the reaction [(1-&gt;4)-alpha-D-glucosyl](n) + ADP-alpha-D-glucose = [(1-&gt;4)-alpha-D-glucosyl](n+1) + ADP + H(+). Its pathway is glycan biosynthesis; glycogen biosynthesis. Its function is as follows. Synthesizes alpha-1,4-glucan chains using ADP-glucose. This is Glycogen synthase from Treponema denticola (strain ATCC 35405 / DSM 14222 / CIP 103919 / JCM 8153 / KCTC 15104).